Reading from the N-terminus, the 540-residue chain is Glucose-6-phosphate isomerase (540 aa).

The active-site Proton donor is Glu346. Residues His377 and Lys505 contribute to the active site.

The protein belongs to the GPI family.

It localises to the cytoplasm. It carries out the reaction alpha-D-glucose 6-phosphate = beta-D-fructose 6-phosphate. The protein operates within carbohydrate biosynthesis; gluconeogenesis. It participates in carbohydrate degradation; glycolysis; D-glyceraldehyde 3-phosphate and glycerone phosphate from D-glucose: step 2/4. In terms of biological role, catalyzes the reversible isomerization of glucose-6-phosphate to fructose-6-phosphate. The sequence is that of Glucose-6-phosphate isomerase from Francisella tularensis subsp. tularensis (strain SCHU S4 / Schu 4).